The following is a 385-amino-acid chain: Deoxyguanosinetriphosphate triphosphohydrolase-like protein (385 aa).

In terms of domain architecture, HD spans 62 to 197; it reads RLTHSLEVAQ…VSLADDIAYS (136 aa).

The protein belongs to the dGTPase family. Type 2 subfamily.

This is Deoxyguanosinetriphosphate triphosphohydrolase-like protein from Neorickettsia sennetsu (strain ATCC VR-367 / Miyayama) (Ehrlichia sennetsu).